The following is a 200-amino-acid chain: Large ribosomal subunit protein uL4 (200 aa).

Residues 38-72 (GRQGSKQQKTRSDVSGGGKRPWRQKGTGRARAGTI) are disordered.

This sequence belongs to the universal ribosomal protein uL4 family. As to quaternary structure, part of the 50S ribosomal subunit.

In terms of biological role, one of the primary rRNA binding proteins, this protein initially binds near the 5'-end of the 23S rRNA. It is important during the early stages of 50S assembly. It makes multiple contacts with different domains of the 23S rRNA in the assembled 50S subunit and ribosome. Its function is as follows. Forms part of the polypeptide exit tunnel. The polypeptide is Large ribosomal subunit protein uL4 (Pseudomonas fluorescens (strain ATCC BAA-477 / NRRL B-23932 / Pf-5)).